We begin with the raw amino-acid sequence, 329 residues long: Apolipoprotein E (329 aa).

Positions 1–18 (MKVLWAALVVALLAGCWA) are cleaved as a signal peptide. 8 consecutive repeat copies span residues 92–113 (TLME…EQLG), 114–135 (PMAS…ARLR), 136–157 (SDME…AMLG), 158–179 (QSTE…KRVL), 180–201 (RDAE…EGAE), 202–223 (RSVS…TRHA), 224–245 (KVDA…QQLR), and 246–267 (GRLE…EQME). Positions 92-267 (TLMEETMKEI…HLDEVREQME (176 aa)) are 8 X 22 AA approximate tandem repeats. M155 bears the Methionine sulfoxide mark. S159 bears the Phosphoserine mark. Residues 170–180 (HMRKLRKRVLR) form an LDL and other lipoprotein receptors binding region. A heparin-binding site is contributed by 174–177 (LRKR). A lipid-binding and lipoprotein association region spans residues 222–302 (HAKVDALATQ…GWFEPLVEDM (81 aa)). Heparin is bound at residue 241–248 (GQQLRGRL). A homooligomerization region spans residues 278–329 (NQMRQQAEPFQARLKGWFEPLVEDMQRQWAVLVEKVQAAVGTSPTTPPVETK). The specificity for association with VLDL stretch occupies residues 290 to 302 (RLKGWFEPLVEDM).

Belongs to the apolipoprotein A1/A4/E family. In terms of assembly, homotetramer. May interact with ABCA1; functionally associated with ABCA1 in the biogenesis of HDLs. May interact with APP/A4 amyloid-beta peptide; the interaction is extremely stable in vitro but its physiological significance is unclear. May interact with MAPT. May interact with MAP2. In the cerebrospinal fluid, interacts with secreted SORL1. Interacts with PMEL; this allows the loading of PMEL luminal fragment on ILVs to induce fibril nucleation. Post-translationally, APOE exists as multiple glycosylated and sialylated glycoforms within cells and in plasma. The extent of glycosylation and sialylation are tissue and context specific. Glycated in plasma VLDL. In terms of processing, phosphorylated by FAM20C in the extracellular medium.

The protein resides in the secreted. Its subcellular location is the extracellular space. It is found in the extracellular matrix. The protein localises to the extracellular vesicle. It localises to the endosome. The protein resides in the multivesicular body. In terms of biological role, APOE is an apolipoprotein, a protein associating with lipid particles, that mainly functions in lipoprotein-mediated lipid transport between organs via the plasma and interstitial fluids. APOE is a core component of plasma lipoproteins and is involved in their production, conversion and clearance. Apolipoproteins are amphipathic molecules that interact both with lipids of the lipoprotein particle core and the aqueous environment of the plasma. As such, APOE associates with chylomicrons, chylomicron remnants, very low density lipoproteins (VLDL) and intermediate density lipoproteins (IDL) but shows a preferential binding to high-density lipoproteins (HDL). It also binds a wide range of cellular receptors including the LDL receptor/LDLR, the LDL receptor-related proteins LRP1, LRP2 and LRP8 and the very low-density lipoprotein receptor/VLDLR that mediate the cellular uptake of the APOE-containing lipoprotein particles. Finally, APOE also has a heparin-binding activity and binds heparan-sulfate proteoglycans on the surface of cells, a property that supports the capture and the receptor-mediated uptake of APOE-containing lipoproteins by cells. A main function of APOE is to mediate lipoprotein clearance through the uptake of chylomicrons, VLDLs, and HDLs by hepatocytes. APOE is also involved in the biosynthesis by the liver of VLDLs as well as their uptake by peripheral tissues ensuring the delivery of triglycerides and energy storage in muscle, heart and adipose tissues. By participating in the lipoprotein-mediated distribution of lipids among tissues, APOE plays a critical role in plasma and tissues lipid homeostasis. APOE is also involved in two steps of reverse cholesterol transport, the HDLs-mediated transport of cholesterol from peripheral tissues to the liver, and thereby plays an important role in cholesterol homeostasis. First, it is functionally associated with ABCA1 in the biogenesis of HDLs in tissues. Second, it is enriched in circulating HDLs and mediates their uptake by hepatocytes. APOE also plays an important role in lipid transport in the central nervous system, regulating neuron survival and sprouting. The polypeptide is Apolipoprotein E (APOE) (Arctocephalus gazella (Antarctic fur seal)).